We begin with the raw amino-acid sequence, 32 residues long: Photosystem II reaction center protein T (32 aa).

Residues 3–23 form a helical membrane-spanning segment; the sequence is AITYTFILFLTLGLLFFAVAF.

This sequence belongs to the PsbT family. PSII is composed of 1 copy each of membrane proteins PsbA, PsbB, PsbC, PsbD, PsbE, PsbF, PsbH, PsbI, PsbJ, PsbK, PsbL, PsbM, PsbT, PsbX, PsbY, PsbZ, Psb30/Ycf12, peripheral proteins PsbO, CyanoQ (PsbQ), PsbU, PsbV and a large number of cofactors. It forms dimeric complexes.

The protein localises to the cellular thylakoid membrane. Its function is as follows. Found at the monomer-monomer interface of the photosystem II (PS II) dimer, plays a role in assembly and dimerization of PSII. PSII is a light-driven water plastoquinone oxidoreductase, using light energy to abstract electrons from H(2)O, generating a proton gradient subsequently used for ATP formation. This Synechococcus sp. (strain JA-2-3B'a(2-13)) (Cyanobacteria bacterium Yellowstone B-Prime) protein is Photosystem II reaction center protein T.